Consider the following 357-residue polypeptide: Undecaprenyl-phosphate alpha-N-acetylglucosaminyl 1-phosphate transferase (357 aa).

7 helical membrane-spanning segments follow: residues 40-60, 64-84, 124-144, 183-203, 209-229, 238-258, and 291-311; these read GAIP…FYLL, QMRL…IGMI, FQLT…IAAI, WSFA…GIPF, VFMG…ILLL, MNPV…IAIM, and FLLI…GEIF.

The protein belongs to the glycosyltransferase 4 family. WecA subfamily. Mg(2+) is required as a cofactor. The cofactor is Mn(2+).

It is found in the cell inner membrane. The enzyme catalyses di-trans,octa-cis-undecaprenyl phosphate + UDP-N-acetyl-alpha-D-glucosamine = N-acetyl-alpha-D-glucosaminyl-di-trans,octa-cis-undecaprenyl diphosphate + UMP. The protein operates within bacterial outer membrane biogenesis; LPS O-antigen biosynthesis. Its function is as follows. Catalyzes the transfer of the GlcNAc-1-phosphate moiety from UDP-GlcNAc onto the carrier lipid undecaprenyl phosphate (C55-P), yielding GlcNAc-pyrophosphoryl-undecaprenyl (GlcNAc-PP-C55). The protein is Undecaprenyl-phosphate alpha-N-acetylglucosaminyl 1-phosphate transferase of Pasteurella multocida (strain Pm70).